We begin with the raw amino-acid sequence, 292 residues long: Inhibitory synaptic factor 1 (292 aa).

Disordered regions lie at residues 1-25 (MNIR…RERI), 122-186 (SDSV…ERVR), and 198-292 (CDDE…KGKN). The stretch at 23 to 63 (ERIRQRMKMVIGQLEDILRELKEVAKELREVVSQIDKLTSD) forms a coiled coil. A compositionally biased stretch (acidic residues) spans 198–214 (CDDEEGDGEEEAAEEEG). Over residues 263–285 (RNSSTQTVSDKSTQTVLPYTATR) the composition is skewed to polar residues.

The protein belongs to the INSYN1 family. Interacts with GPHN.

It is found in the postsynaptic density. In terms of biological role, component of the protein machinery at the inhibitory synapses, probably acting as a scaffold. Inhibitory synapses dampen neuronal activity through postsynaptic hyperpolarization. This synaptic inhibition is fundamental for the functioning of the central nervous system, shaping and orchestrating the flow of information through neuronal networks to generate a precise neural code. This is Inhibitory synaptic factor 1 from Bos taurus (Bovine).